An 820-amino-acid chain; its full sequence is MAAGKFASLPRNMPVNHQFPLASSMDLLSSKSPLAERRTDAYQDVSIHGTLPRKKKGPPSIRSCDNAGHSKSPRQSSPLTQDIIQENPLQDRKGENFIFRDPYLLDPTLEYVKFSKERHIMDRTPERLKKELEEELLLSSEDLRSHAWYHGRIPRQVSENLVQRDGDFLVRDSLSSPGNFVLTCQWKNLAQHFKINRTVLRLSEAYSRVQYQFEMESFDSIPGLVRCYVGNRRPISQQSGAIIFQPINRTVPLWCLEERYGTSPGRGREGSLAEGRPDVVKRLSLTTGSSIQAREHSLPRGNLLRNKEKSGSQPACLDHVQDRKALTLKAHQSESHLPIGCKLPPQSPSMDTSPCPSSPVFRTGSEPTLSPALVRRFSSDARTGEALRGSDSQLCPKPPPKPCKVPFLKTPPSPSPWLTSEANYCELNPAFAVGCDRGAKLPMQAHDSHEMLLTAKQNGPSGPRNSGINYMILDGDDQARHWDPLAVQTDEGQEDKTKFVPPLMETVSSFRPNDFESKLLPPENKPLETAMLKHAKELFTNHDARVIAQHMLSVDCKVARILEVSEDRKRSMGVSSGLELITLPHGRQLRLDIIERHNTMAIGIAVDILGCTGTLENRAGTLNKIIQVAVELKDAMGDLYAFSAIMKALEMPQITRLEKTWTALRHHYTQTAILYEKQLKPFSKILHEGRESTYVPASNVSVPLLMPLVTLMERQAVTFEGTDMWENNDESCEILLNHLATARFMAEASESYRMNAERILADFQPDEEMTEILRTEFQMRLLWGSKGAEVNQNERYDKFNQILTALSRKLEPPSGKQAEL.

Ala-2 is modified (N-acetylalanine). Residues Ser-32, Ser-72, Ser-77, Ser-176, and Ser-284 each carry the phosphoserine modification. The disordered stretch occupies residues 40-81 (DAYQDVSIHGTLPRKKKGPPSIRSCDNAGHSKSPRQSSPLTQ). The SH2 domain maps to 148 to 247 (WYHGRIPRQV…QSGAIIFQPI (100 aa)). An N6-methyllysine modification is found at Lys-329. The segment at 346–367 (QSPSMDTSPCPSSPVFRTGSEP) is disordered. Phosphoserine is present on residues Ser-353, Ser-358, and Ser-370. At Arg-437 the chain carries Omega-N-methylarginine. Ser-466 bears the Phosphoserine mark. The Ras-GEF domain maps to 543–813 (DARVIAQHML…TALSRKLEPP (271 aa)). The tract at residues 739–743 (LATAR) is mediates the interaction with BCAR1/p130CAS.

In terms of assembly, part of a complex comprised of PTPRA, BCAR1, BCAR3 (via SH2 domain) and SRC; the formation of the complex is dependent on integrin mediated-tyrosine phosphorylation of PTPRA. Within the complex, interacts (via SH2 domain) with PTPRA (when phosphorylated on 'Tyr-825'). Interacts (via Ras-GEF domain) with BCAR1. Interacts (via Ras-GEF domain) with NEDD9. Interacts with PTK2B/FAK1. Interacts with PTPN1. Interacts (via SH2 domain) with EGFR (when tyrosine-phosphorylated). In terms of processing, phosphorylated on tyrosine residues. In terms of tissue distribution, abundantly expressed in the lung and brain, with lower expression in splenic lymphocytes and liver (at protein level). Expressed in splenic lymphocytes (at protein level). Expressed in the lymph node cortical region, periphery of the splenic white pulp and in alveolar lung fibroblasts. Expressed in epithelial cells in the lens equatorial region and early stage nucleated cortical lens fiber cells. Expressed in the thymus. Expressed in B-cells.

The protein localises to the cytoplasm. The protein resides in the cell junction. Its subcellular location is the focal adhesion. In terms of biological role, acts as an adapter protein downstream of several growth factor receptors to promote cell proliferation, migration, and redistribution of actin fibers. Specifically involved in INS/insulin signaling pathway by mediating MAPK1/ERK2-MAPK3/ERK1 activation and DNA synthesis. Promotes insulin-mediated membrane ruffling. In response to vasoconstrictor peptide EDN1, involved in the activation of RAP1 downstream of PTK2B via interaction with phosphorylated BCAR1. Inhibits cell migration and invasion via regulation of TGFB-mediated matrix digestion, actin filament rearrangement, and inhibition of invadopodia activity. May inhibit TGFB-SMAD signaling, via facilitating BCAR1 and SMAD2 and/or SMAD3 interaction. Regulates EGF-induced DNA synthesis. Required for the maintenance of ocular lens morphology and structural integrity, potentially via regulation of focal adhesion complex signaling. Acts upstream of PTPRA to regulate the localization of BCAR1 and PTPRA to focal adhesions, via regulation of SRC-mediated phosphorylation of PTPRA. Positively regulates integrin-induced tyrosine phosphorylation of BCAR1. Acts as a guanine nucleotide exchange factor (GEF) for small GTPases RALA, RAP1A and RRAS. However, in a contrasting study, lacks GEF activity towards RAP1. The sequence is that of Breast cancer anti-estrogen resistance protein 3 homolog (Bcar3) from Mus musculus (Mouse).